Consider the following 325-residue polypeptide: Probable cell division protein WhiA (325 aa).

Residues 273 to 306 constitute a DNA-binding region (H-T-H motif); sequence SLEELGRLADPPMTKDAVAGRIRRLLSMADRKAK.

It belongs to the WhiA family.

Involved in cell division and chromosome segregation. This Mycobacterium bovis (strain BCG / Tokyo 172 / ATCC 35737 / TMC 1019) protein is Probable cell division protein WhiA.